The following is a 172-amino-acid chain: 3-hydroxydecanoyl-[acyl-carrier-protein] dehydratase (172 aa).

The active site involves His71.

This sequence belongs to the thioester dehydratase family. FabA subfamily. As to quaternary structure, homodimer.

The protein resides in the cytoplasm. It carries out the reaction a (3R)-hydroxyacyl-[ACP] = a (2E)-enoyl-[ACP] + H2O. The catalysed reaction is (3R)-hydroxydecanoyl-[ACP] = (2E)-decenoyl-[ACP] + H2O. It catalyses the reaction (2E)-decenoyl-[ACP] = (3Z)-decenoyl-[ACP]. It participates in lipid metabolism; fatty acid biosynthesis. Its function is as follows. Necessary for the introduction of cis unsaturation into fatty acids. Catalyzes the dehydration of (3R)-3-hydroxydecanoyl-ACP to E-(2)-decenoyl-ACP and then its isomerization to Z-(3)-decenoyl-ACP. Can catalyze the dehydratase reaction for beta-hydroxyacyl-ACPs with saturated chain lengths up to 16:0, being most active on intermediate chain length. This chain is 3-hydroxydecanoyl-[acyl-carrier-protein] dehydratase, found in Escherichia coli (strain SE11).